The primary structure comprises 230 residues: uncharacterized protein (230 aa).

Residues 7–23 (LFTASILSLGYLVFICG) form a helical membrane-spanning segment. A disordered region spans residues 27–230 (KPKPTASTES…VKTEGTLKKN (204 aa)). The segment covering 50 to 59 (AVPQKPAAPA) has biased composition (low complexity). The segment covering 60-83 (AEEKAPVDPKDPKSKDVDEAKKPD) has biased composition (basic and acidic residues). Residues 101 to 112 (KKSKKSEKSKKK) are compositionally biased toward basic residues. Residues 113–173 (KTEEKVMSED…KEKSKDETVP (61 aa)) are compositionally biased toward basic and acidic residues. A compositionally biased stretch (acidic residues) spans 199–210 (ETDEFPTIDEDA). Over residues 211–230 (EKTKKTEKKDVKTEGTLKKN) the composition is skewed to basic and acidic residues.

It is found in the membrane. This is an uncharacterized protein from Caenorhabditis elegans.